We begin with the raw amino-acid sequence, 301 residues long: Homoserine kinase (301 aa).

86–96 (PLARGLGSSAT) contacts ATP.

It belongs to the GHMP kinase family. Homoserine kinase subfamily.

The protein resides in the cytoplasm. The catalysed reaction is L-homoserine + ATP = O-phospho-L-homoserine + ADP + H(+). Its pathway is amino-acid biosynthesis; L-threonine biosynthesis; L-threonine from L-aspartate: step 4/5. In terms of biological role, catalyzes the ATP-dependent phosphorylation of L-homoserine to L-homoserine phosphate. In Thermosynechococcus vestitus (strain NIES-2133 / IAM M-273 / BP-1), this protein is Homoserine kinase.